Reading from the N-terminus, the 328-residue chain is Beta-ketoacyl-[acyl-carrier-protein] synthase III (328 aa).

Residues Cys-122 and His-255 contribute to the active site. The tract at residues 256 to 260 (QANVR) is ACP-binding. Asn-285 is a catalytic residue.

The protein belongs to the thiolase-like superfamily. FabH family. In terms of assembly, homodimer.

It is found in the cytoplasm. The catalysed reaction is malonyl-[ACP] + acetyl-CoA + H(+) = 3-oxobutanoyl-[ACP] + CO2 + CoA. The protein operates within lipid metabolism; fatty acid biosynthesis. Functionally, catalyzes the condensation reaction of fatty acid synthesis by the addition to an acyl acceptor of two carbons from malonyl-ACP. Catalyzes the first condensation reaction which initiates fatty acid synthesis and may therefore play a role in governing the total rate of fatty acid production. Possesses both acetoacetyl-ACP synthase and acetyl transacylase activities. Its substrate specificity determines the biosynthesis of branched-chain and/or straight-chain of fatty acids. The protein is Beta-ketoacyl-[acyl-carrier-protein] synthase III of Bordetella pertussis (strain Tohama I / ATCC BAA-589 / NCTC 13251).